Here is a 176-residue protein sequence, read N- to C-terminus: MTGADDPARPAVGPQSFRDAMAQLASPVTVVTVLDAAGRRHGFTAGSVVSVSLDPPLVMVGIALTSSCHTAMAAAAEFCVSILGEDQRAVAKRCATHGADRFAGGEFAAWDGTGVPYLPDAKVVLRCRTTDVVRAGDHDLVLGTPVEIRTGDPAKPPLLWYRRDFHTPTPTTPALA.

Its function is as follows. Provides the reduced form of flavin mononucleotide for the PIIA synthase reaction. This is NADH:riboflavin 5'-phosphate oxidoreductase (snaC) from Streptomyces pristinaespiralis.